A 215-amino-acid polypeptide reads, in one-letter code: MGLEKPQSKLEGGMHPQLIPSVIAVVFILLLSVCFIASCLVTHHNFSRCKRGTGVHKLEHHAKLKCIKEKSELKSAEGSTWNCCPIDWRAFQSNCYFPLTDNKTWAESERNCSGMGAHLMTISTEAEQNFIIQFLDRRLSYFLGLRDENAKGQWRWVDQTPFNPRRVFWHKNEPDNSQGENCVVLVYNQDKWAWNDVPCNFEASRICKIPGTTLN.

Over 1–17 the chain is Cytoplasmic; sequence MGLEKPQSKLEGGMHPQ. The chain crosses the membrane as a helical; Signal-anchor for type II membrane protein span at residues 18–38; that stretch reads LIPSVIAVVFILLLSVCFIAS. The Extracellular portion of the chain corresponds to 39–215; sequence CLVTHHNFSR…ICKIPGTTLN (177 aa). N45 carries N-linked (GlcNAc...) asparagine glycosylation. C84 and C95 are oxidised to a cystine. The 118-residue stretch at 91–208 folds into the C-type lectin domain; sequence FQSNCYFPLT…CNFEASRICK (118 aa). 2 N-linked (GlcNAc...) asparagine glycosylation sites follow: N102 and N111. 2 disulfide bridges follow: C112/C207 and C182/C199. The Ca(2+) site is built by E173, D175, N195, and D196.

As to quaternary structure, heterodimer with CLEC4E; disulfide-linked. CLEC4E acts as a bridge for interaction between CLEC4D and FCER1G to form a functional complex. Heterodimer with CLEC6A; this heterodimer forms a pattern recognition receptor (PRR) against fungal infection. As to expression, expressed weakly in peripheral blood leukocytes, bone marrow and spleen. Expression is confined mostly in monocytes and macrophage and seems to be up-regulated by IL-6, IL-10, TNF-alpha and IFN-gamma.

The protein resides in the cell membrane. Functionally, calcium-dependent lectin that acts as a pattern recognition receptor (PRR) of the innate immune system: recognizes damage-associated molecular patterns (DAMPs) of pathogen-associated molecular patterns (PAMPs) of bacteria and fungi. The PAMPs include alpha-mannans on C.albicans hypheas and mycobacterial trehalose 6,6'-dimycolate (TDM). Interacts with signaling adapter Fc receptor gamma chain/FCER1G, likely via CLEC4E, to form a functional complex in myeloid cells. Binding of mycobacterial TDM or C.albicans alpha-mannans to this receptor complex leads to phosphorylation of the immunoreceptor tyrosine-based activation motif (ITAM) of FCER1G, triggering activation of SYK, CARD9 and NF-kappa-B, consequently driving maturation of antigen-presenting cells and shaping antigen-specific priming of T-cells toward effector T-helper 1 and T-helper 17 cell subtypes. The heterodimer formed with CLEC6A is active against fungal infection. Functions as an endocytic receptor. May be involved in antigen uptake at the site of infection, either for clearance of the antigen, or for processing and further presentation to T-cells. This Homo sapiens (Human) protein is C-type lectin domain family 4 member D.